A 384-amino-acid chain; its full sequence is Troponin T (384 aa).

Acidic residues predominate over residues Met1–Pro15. 4 disordered regions span residues Met1–Ser23, Arg61–Leu169, Leu237–Pro257, and Pro313–Glu384. Basic and acidic residues-rich tracts occupy residues Arg61–Lys74 and Met81–Arg126. A compositionally biased stretch (basic and acidic residues) spans Phe316–Pro327. Over residues Glu328–Glu384 the composition is skewed to acidic residues.

The protein belongs to the troponin T family.

Functionally, troponin T is the tropomyosin-binding subunit of troponin, the thin filament regulatory complex which confers calcium-sensitivity to striated muscle actomyosin ATPase activity. The polypeptide is Troponin T (TNT) (Periplaneta americana (American cockroach)).